A 408-amino-acid chain; its full sequence is BTB/POZ and MATH domain-containing protein 3 (408 aa).

The MATH domain occupies Asn24–Val158. In terms of domain architecture, BTB spans Cys194–His261.

It belongs to the Tdpoz family. Homodimer or heterodimer with BPM3 and BPM5. Interacts with CUL3A and CUL3B. Interacts with RAP2-4 and RAP2-13. Binds to MYB56 at the promoter of FLOWERING LOCUS T (FT). Ubiquitous.

The protein resides in the nucleus. The protein localises to the cytoplasm. It participates in protein modification; protein ubiquitination. Functionally, may act as a substrate-specific adapter of an E3 ubiquitin-protein ligase complex (CUL3-RBX1-BTB) which mediates the ubiquitination and subsequent proteasomal degradation of target proteins. This is BTB/POZ and MATH domain-containing protein 3 from Arabidopsis thaliana (Mouse-ear cress).